The primary structure comprises 311 residues: Ribose-phosphate pyrophosphokinase (311 aa).

ATP is bound by residues 37 to 39 (DGE) and 96 to 97 (RQ). Mg(2+) is bound by residues histidine 130 and aspartate 170. Residue lysine 193 is part of the active site. D-ribose 5-phosphate is bound by residues arginine 195, aspartate 219, and 223-227 (DTAGT).

The protein belongs to the ribose-phosphate pyrophosphokinase family. Class I subfamily. As to quaternary structure, homohexamer. It depends on Mg(2+) as a cofactor.

The protein localises to the cytoplasm. The enzyme catalyses D-ribose 5-phosphate + ATP = 5-phospho-alpha-D-ribose 1-diphosphate + AMP + H(+). It functions in the pathway metabolic intermediate biosynthesis; 5-phospho-alpha-D-ribose 1-diphosphate biosynthesis; 5-phospho-alpha-D-ribose 1-diphosphate from D-ribose 5-phosphate (route I): step 1/1. Functionally, involved in the biosynthesis of the central metabolite phospho-alpha-D-ribosyl-1-pyrophosphate (PRPP) via the transfer of pyrophosphoryl group from ATP to 1-hydroxyl of ribose-5-phosphate (Rib-5-P). This is Ribose-phosphate pyrophosphokinase from Aquifex aeolicus (strain VF5).